Here is a 449-residue protein sequence, read N- to C-terminus: Glutathione reductase (449 aa).

Ser15, Gly16, Glu35, Thr42, Cys43, and Lys51 together coordinate FAD. Ser15 contributes to the glutathione binding site. Residues Cys43 and Cys48 are joined by a disulfide bond. Tyr99 contributes to the glutathione binding site. Residue Ala115 coordinates FAD. Gly175, Ile178, Glu181, Arg198, Arg204, and Gly261 together coordinate NADP(+). Positions 302 and 310 each coordinate FAD. An NADP(+)-binding site is contributed by Ala340. His435 lines the FAD pocket. His435 functions as the Proton acceptor in the catalytic mechanism.

The protein belongs to the class-I pyridine nucleotide-disulfide oxidoreductase family. As to quaternary structure, homodimer. FAD serves as cofactor.

The protein localises to the cytoplasm. The catalysed reaction is 2 glutathione + NADP(+) = glutathione disulfide + NADPH + H(+). Its pathway is xenobiotic degradation; (2,4,5-trichlorophenoxy)acetate degradation. Catalyzes the reduction of glutathione disulfide (GSSG) to reduced glutathione (GSH). Constitutes the major mechanism to maintain a high GSH:GSSG ratio in the cytosol. In Burkholderia cepacia (Pseudomonas cepacia), this protein is Glutathione reductase (gor).